A 146-amino-acid chain; its full sequence is Probable U6 snRNA-associated Sm-like protein LSm4 (146 aa).

One can recognise a Sm domain in the interval 2–75; the sequence is LPLSLLKTAQ…IKYLRVPDEV (74 aa). The segment covering 80–91 has biased composition (basic and acidic residues); the sequence is QEEAKSRTDRKP. Positions 80 to 146 are disordered; the sequence is QEEAKSRTDR…GGRGGGRGRG (67 aa). Gly residues predominate over residues 137 to 146; that stretch reads GGRGGGRGRG.

It belongs to the snRNP Sm proteins family. In terms of assembly, LSm subunits form a heteromer with a doughnut shape.

The protein resides in the nucleus. In terms of biological role, binds specifically to the 3'-terminal U-tract of U6 snRNA. This Nicotiana tabacum (Common tobacco) protein is Probable U6 snRNA-associated Sm-like protein LSm4.